A 97-amino-acid polypeptide reads, in one-letter code: Mitochondrial import inner membrane translocase subunit Tim8 A (97 aa).

The short motif at 43–66 is the Twin CX3C motif element; sequence CWEKCMDKPGPKLDSRAEACFVNC. Cystine bridges form between Cys43/Cys66 and Cys47/Cys62. Phosphoserine occurs at positions 57, 87, 94, and 96.

It belongs to the small Tim family. As to quaternary structure, heterohexamer; composed of 3 copies of TIMM8A and 3 copies of TIMM13, named soluble 70 kDa complex. Associates with the TIM22 complex, whose core is composed of TIMM22. Present at high level in liver and brain, and at lower level in muscle and heart. In CNS sections, it is predominantly present in the soma and the dendritic portion of the Purkinje cells of the cerebellum, but not in the glial cells. Scattered expression also is also detected in the brain stem, olfactory bulb, substantia nigra, hippocampus and striatum (at protein level). Ubiquitously expressed.

Its subcellular location is the mitochondrion inner membrane. In terms of biological role, mitochondrial intermembrane chaperone that participates in the import and insertion of some multi-pass transmembrane proteins into the mitochondrial inner membrane. Also required for the transfer of beta-barrel precursors from the TOM complex to the sorting and assembly machinery (SAM complex) of the outer membrane. Acts as a chaperone-like protein that protects the hydrophobic precursors from aggregation and guide them through the mitochondrial intermembrane space. The TIMM8-TIMM13 complex mediates the import of proteins such as TIMM23, SLC25A12/ARALAR1 and SLC25A13/ARALAR2, while the predominant TIMM9-TIMM10 70 kDa complex mediates the import of much more proteins. This Mus musculus (Mouse) protein is Mitochondrial import inner membrane translocase subunit Tim8 A (Timm8a1).